A 262-amino-acid chain; its full sequence is Hydroxyethylthiazole kinase (262 aa).

Met50 provides a ligand contact to substrate. 2 residues coordinate ATP: Arg125 and Thr171. A substrate-binding site is contributed by Gly198.

This sequence belongs to the Thz kinase family. It depends on Mg(2+) as a cofactor.

It carries out the reaction 5-(2-hydroxyethyl)-4-methylthiazole + ATP = 4-methyl-5-(2-phosphooxyethyl)-thiazole + ADP + H(+). The protein operates within cofactor biosynthesis; thiamine diphosphate biosynthesis; 4-methyl-5-(2-phosphoethyl)-thiazole from 5-(2-hydroxyethyl)-4-methylthiazole: step 1/1. Catalyzes the phosphorylation of the hydroxyl group of 4-methyl-5-beta-hydroxyethylthiazole (THZ). The sequence is that of Hydroxyethylthiazole kinase from Escherichia coli O6:K15:H31 (strain 536 / UPEC).